The chain runs to 560 residues: Phenylalanine--tRNA ligase beta subunit (560 aa).

Positions 279–354 constitute a B5 domain; it reads LTPKEFEVDL…IAYGYNNIEP (76 aa). The Mg(2+) site is built by Asp332, Asp338, Glu341, and Asp342.

This sequence belongs to the phenylalanyl-tRNA synthetase beta subunit family. Type 2 subfamily. Tetramer of two alpha and two beta subunits. It depends on Mg(2+) as a cofactor.

It localises to the cytoplasm. It carries out the reaction tRNA(Phe) + L-phenylalanine + ATP = L-phenylalanyl-tRNA(Phe) + AMP + diphosphate + H(+). In Thermococcus sibiricus (strain DSM 12597 / MM 739), this protein is Phenylalanine--tRNA ligase beta subunit.